A 130-amino-acid chain; its full sequence is Small ribosomal subunit protein uS11 (130 aa).

It belongs to the universal ribosomal protein uS11 family. Part of the 30S ribosomal subunit. Interacts with proteins S7 and S18. Binds to IF-3.

In terms of biological role, located on the platform of the 30S subunit, it bridges several disparate RNA helices of the 16S rRNA. Forms part of the Shine-Dalgarno cleft in the 70S ribosome. The sequence is that of Small ribosomal subunit protein uS11 from Prochlorococcus marinus (strain AS9601).